A 309-amino-acid chain; its full sequence is MKYRLIGVGASLVVAVMLTGCQAKATTLVKSDAGQVTQAEVFKQIENQATTQQAVQELTLNKVLNQRYHVSQAEVTAKLKAFKRQAGANYHMILERNHVTEPRLKSQIKANLLMEKAVSAKYPVTKAQLKKARAAYMPMTTVQHIATTNEKQAQKIIAELNAGASFDSQVRKYQNNRQAHTTAGKLAQFDSYNQTLAPAIVQATAKLRVGHYVTKPVKTVMATADTKDKPTYEIINVVSRRSKTAAVTDDSGKQIDVTNYLREKIQQQRMMDKQTQVATIRSVFKAAHVKVVDAHFAPAFNDYLTTQNS.

Residues 1-20 (MKYRLIGVGASLVVAVMLTG) form the signal peptide. Cysteine 21 carries the N-palmitoyl cysteine lipid modification. A lipid anchor (S-diacylglycerol cysteine) is attached at cysteine 21. The 96-residue stretch at 137–232 (MPMTTVQHIA…TADTKDKPTY (96 aa)) folds into the PpiC domain.

This sequence belongs to the PrsA family.

The protein resides in the cell membrane. It catalyses the reaction [protein]-peptidylproline (omega=180) = [protein]-peptidylproline (omega=0). Plays a major role in protein secretion by helping the post-translocational extracellular folding of several secreted proteins. The chain is Foldase protein PrsA 2 (prsA2) from Lactiplantibacillus plantarum (strain ATCC BAA-793 / NCIMB 8826 / WCFS1) (Lactobacillus plantarum).